The following is a 190-amino-acid chain: Peptidyl-tRNA hydrolase (190 aa).

A tRNA-binding site is contributed by Tyr-18. The active-site Proton acceptor is His-23. The tRNA site is built by Phe-69, Asn-71, and Asn-117.

This sequence belongs to the PTH family. As to quaternary structure, monomer.

It is found in the cytoplasm. The enzyme catalyses an N-acyl-L-alpha-aminoacyl-tRNA + H2O = an N-acyl-L-amino acid + a tRNA + H(+). In terms of biological role, hydrolyzes ribosome-free peptidyl-tRNAs (with 1 or more amino acids incorporated), which drop off the ribosome during protein synthesis, or as a result of ribosome stalling. Catalyzes the release of premature peptidyl moieties from peptidyl-tRNA molecules trapped in stalled 50S ribosomal subunits, and thus maintains levels of free tRNAs and 50S ribosomes. The polypeptide is Peptidyl-tRNA hydrolase (Rhodococcus opacus (strain B4)).